We begin with the raw amino-acid sequence, 361 residues long: Epi-isozizaene synthase (361 aa).

Positions 99, 103, 240, 244, and 248 each coordinate Mg(2+). Positions 99–103 (DDRHD) match the DDXXD motif motif.

Belongs to the terpene synthase family. Mg(2+) serves as cofactor. Requires Mn(2+) as cofactor. The cofactor is Fe(3+).

It carries out the reaction (2E,6E)-farnesyl diphosphate = (+)-epi-isozizaene + diphosphate. It functions in the pathway sesquiterpene biosynthesis; epi-isozizaene biosynthesis. Its function is as follows. Catalyzes the cyclization of farnesyl diphosphate (FPP) to the sesquiterpene epi-isozizaene. This is Epi-isozizaene synthase (cyc1) from Streptomyces coelicolor (strain ATCC BAA-471 / A3(2) / M145).